Reading from the N-terminus, the 93-residue chain is MPLASPIQHHEVTRGVAPSMALRDGVCRIPLSAEFTAQCTDSQAPQMKRAPRCCCLAVVAQCPHHCPVLGCWSGCRCCCYCVFELHWLYCIQE.

This is an uncharacterized protein from Homo sapiens (Human).